We begin with the raw amino-acid sequence, 116 residues long: U16-barytoxin-Tl1c (116 aa).

A signal peptide spans 1 to 20; sequence MKTIIVFLSLLVLATKFGDA. A propeptide spanning residues 21-76 is cleaved from the precursor; the sequence is NEGVNQEQMKEVIQNEFREDFLNEMAPMSLLQQLEAIESTLLEKEADRNSRQKRCN. Intrachain disulfides connect cysteine 75–cysteine 90, cysteine 82–cysteine 95, and cysteine 89–cysteine 110.

The protein belongs to the neurotoxin 14 (magi-1) family. 06 (ICK-Trit) subfamily. As to expression, expressed by the venom gland.

Its subcellular location is the secreted. Ion channel inhibitor. This Trittame loki (Brush-footed trapdoor spider) protein is U16-barytoxin-Tl1c.